An 85-amino-acid chain; its full sequence is Acylphosphatase (85 aa).

The Acylphosphatase-like domain occupies 3-85 (AARFVVSGVV…PARFRRLKTL (83 aa)). Active-site residues include Arg-18 and Asn-36. Residues 66 to 85 (PPRSRRSRARPARFRRLKTL) are disordered.

This sequence belongs to the acylphosphatase family.

The enzyme catalyses an acyl phosphate + H2O = a carboxylate + phosphate + H(+). In Xanthomonas axonopodis pv. citri (strain 306), this protein is Acylphosphatase (acyP).